Consider the following 538-residue polypeptide: Putative cysteine ligase BshC (538 aa).

A coiled-coil region spans residues 248–268 (ISKYKEVQEGLRNQQEVIKEL).

Belongs to the BshC family.

In terms of biological role, involved in bacillithiol (BSH) biosynthesis. May catalyze the last step of the pathway, the addition of cysteine to glucosamine malate (GlcN-Mal) to generate BSH. The polypeptide is Putative cysteine ligase BshC (Bacillus cereus (strain G9842)).